The chain runs to 314 residues: Ribosomal RNA small subunit methyltransferase H (314 aa).

Residues 32–34 (GGH), Asp52, Phe79, Asp100, and Gln107 each bind S-adenosyl-L-methionine.

The protein belongs to the methyltransferase superfamily. RsmH family.

It is found in the cytoplasm. It carries out the reaction cytidine(1402) in 16S rRNA + S-adenosyl-L-methionine = N(4)-methylcytidine(1402) in 16S rRNA + S-adenosyl-L-homocysteine + H(+). In terms of biological role, specifically methylates the N4 position of cytidine in position 1402 (C1402) of 16S rRNA. This is Ribosomal RNA small subunit methyltransferase H from Shouchella clausii (strain KSM-K16) (Alkalihalobacillus clausii).